The chain runs to 494 residues: MASRILVNIKEEVTCPICLELLTEPLSLDCGHSFCQACITANHKESTLHQGERSCPLCRMSYPSENLRPNRHLANIVERLKEVMLSPEEGQKVDHCARHGEKLLLFCQQDGNVICWLCERSQEHRGHHTFLVEEVAEKYQGKLQVALEMMRQKQQDAEKLEADVREEQASWKIQIQNDKTNIMAEFKQLRDILDCEESKELQNLEKEEKNILKRLVQSESDMVLQTQSIRVLISDLERRLQGSVMELLQGVDDVIKRIEKVTLQKPKTFLNEKRRVFRAPDLKGMLQAFKELTEVQRYWAHVTLVPSHPSCTVISEDERQVRYQVPIHQPLVKVKYFYGVLGSLSITSGKHYWEVDVSNKRGWILGVCGSWKCNAKWNVLRPENYQPKNGYWVIGLRNTDNYSAFQDAVKYSDVQDGSRSVSSGPLIVPLFMTICPNRVGVFLDYEACTISFFNVTSNGFLIYKFSNCHFSYPVFPYFSPTTCELPMTLCSPSS.

At Ala2 the chain carries N-acetylalanine. Residues 15 to 59 (CPICLELLTEPLSLDCGHSFCQACITANHKESTLHQGERSCPLCR) form an RING-type zinc finger. The residue at position 86 (Ser86) is a Phosphoserine. A B box-type zinc finger spans residues 91-132 (QKVDHCARHGEKLLLFCQQDGNVICWLCERSQEHRGHHTFLV). Zn(2+)-binding residues include Cys96, His99, Cys118, and His124. A coiled-coil region spans residues 132 to 223 (VEEVAEKYQG…RLVQSESDMV (92 aa)). Residues 186-199 (FKQLRDILDCEESK) form a required for interaction with GABARAP and for autophagy region. The B30.2/SPRY domain occupies 280 to 494 (PDLKGMLQAF…LPMTLCSPSS (215 aa)).

It belongs to the TRIM/RBCC family. As to quaternary structure, can form homodimers and homotrimers. In addition to lower-order dimerization, also exhibits a higher-order multimerization and both low- and high-order multimerizations are essential for its restriction activity. Interacts with BTBD1 and BTBD2. Interacts with PSMC4, PSMC5, PSMD7 and HSPA8/HSC70. Interacts (via B30.2/SPRY domain) with HSPA1A/B. Interacts with PSMC2, MAP3K7/TAK1, TAB2 and TAB3. Interacts with SQSTM1. Interacts with TRIM6 and TRIM34. Interacts with ULK1 (phosphorylated form), GABARAP, GABARAPL1, GABARAPL2, MAP1LC3A, MAP1LC3C and BECN1. In terms of processing, degraded in a proteasome-independent fashion in the absence of viral infection but in a proteasome-dependent fashion following exposure to restriction sensitive virus. Autoubiquitinated in a RING finger- and UBE2D2-dependent manner. Monoubiquitinated by TRIM21. Deubiquitinated by Yersinia YopJ. Ubiquitination may not lead to proteasomal degradation.

The protein resides in the cytoplasm. Its subcellular location is the nucleus. It catalyses the reaction S-ubiquitinyl-[E2 ubiquitin-conjugating enzyme]-L-cysteine + [acceptor protein]-L-lysine = [E2 ubiquitin-conjugating enzyme]-L-cysteine + N(6)-ubiquitinyl-[acceptor protein]-L-lysine.. The protein operates within protein modification; protein ubiquitination. In terms of biological role, capsid-specific restriction factor that prevents infection from non-host-adapted retroviruses. Blocks viral replication early in the life cycle, after viral entry but before reverse transcription. In addition to acting as a capsid-specific restriction factor, also acts as a pattern recognition receptor that activates innate immune signaling in response to the retroviral capsid lattice. Binding to the viral capsid triggers its E3 ubiquitin ligase activity, and in concert with the heterodimeric ubiquitin conjugating enzyme complex UBE2V1-UBE2N (also known as UBC13-UEV1A complex) generates 'Lys-63'-linked polyubiquitin chains, which in turn are catalysts in the autophosphorylation of the MAP3K7/TAK1 complex (includes TAK1, TAB2, and TAB3). Activation of the MAP3K7/TAK1 complex by autophosphorylation results in the induction and expression of NF-kappa-B and MAPK-responsive inflammatory genes, thereby leading to an innate immune response in the infected cell. Plays a role in regulating autophagy through activation of autophagy regulator BECN1 by causing its dissociation from its inhibitors BCL2 and TAB2. This is Tripartite motif-containing protein 5 (TRIM5) from Cebuella pygmaea (Pygmy marmoset).